Reading from the N-terminus, the 174-residue chain is Crossover junction endodeoxyribonuclease RuvC (174 aa).

Residues Asp-8, Glu-67, and Asp-139 contribute to the active site. Mg(2+) is bound by residues Asp-8, Glu-67, and Asp-139.

It belongs to the RuvC family. As to quaternary structure, homodimer which binds Holliday junction (HJ) DNA. The HJ becomes 2-fold symmetrical on binding to RuvC with unstacked arms; it has a different conformation from HJ DNA in complex with RuvA. In the full resolvosome a probable DNA-RuvA(4)-RuvB(12)-RuvC(2) complex forms which resolves the HJ. Mg(2+) serves as cofactor.

The protein resides in the cytoplasm. It carries out the reaction Endonucleolytic cleavage at a junction such as a reciprocal single-stranded crossover between two homologous DNA duplexes (Holliday junction).. In terms of biological role, the RuvA-RuvB-RuvC complex processes Holliday junction (HJ) DNA during genetic recombination and DNA repair. Endonuclease that resolves HJ intermediates. Cleaves cruciform DNA by making single-stranded nicks across the HJ at symmetrical positions within the homologous arms, yielding a 5'-phosphate and a 3'-hydroxyl group; requires a central core of homology in the junction. The consensus cleavage sequence is 5'-(A/T)TT(C/G)-3'. Cleavage occurs on the 3'-side of the TT dinucleotide at the point of strand exchange. HJ branch migration catalyzed by RuvA-RuvB allows RuvC to scan DNA until it finds its consensus sequence, where it cleaves and resolves the cruciform DNA. The chain is Crossover junction endodeoxyribonuclease RuvC from Pseudoalteromonas translucida (strain TAC 125).